The following is a 185-amino-acid chain: Probable gluconokinase (185 aa).

Glycine 11–serine 18 contributes to the ATP binding site.

The protein belongs to the gluconokinase GntK/GntV family.

The enzyme catalyses D-gluconate + ATP = 6-phospho-D-gluconate + ADP + H(+). Its pathway is carbohydrate acid metabolism; D-gluconate degradation. In Rattus norvegicus (Rat), this protein is Probable gluconokinase (Idnk).